Here is a 398-residue protein sequence, read N- to C-terminus: L-rhamnonate dehydratase (398 aa).

Positions 22 and 48 each coordinate substrate. Mg(2+)-binding residues include Asp-214, Glu-241, and Glu-269. The active-site Proton acceptor is His-319. Residue Glu-339 coordinates substrate.

This sequence belongs to the mandelate racemase/muconate lactonizing enzyme family. RhamD subfamily. Homooctamer; tetramer of dimers. The cofactor is Mg(2+).

It carries out the reaction L-rhamnonate = 2-dehydro-3-deoxy-L-rhamnonate + H2O. Its function is as follows. Catalyzes the dehydration of L-rhamnonate to 2-keto-3-deoxy-L-rhamnonate (KDR). The sequence is that of L-rhamnonate dehydratase from Verminephrobacter eiseniae (strain EF01-2).